Reading from the N-terminus, the 56-residue chain is uncharacterized protein (56 aa).

This sequence belongs to the archaeal ATPase family.

This is an uncharacterized protein from Methanocaldococcus jannaschii (strain ATCC 43067 / DSM 2661 / JAL-1 / JCM 10045 / NBRC 100440) (Methanococcus jannaschii).